Here is a 246-residue protein sequence, read N- to C-terminus: ATP synthase subunit a (246 aa).

Positions 1–3 are cleaved as a propeptide — removed in mature form; it reads MFY. 7 consecutive transmembrane segments (helical) span residues 20-40, 56-76, 82-102, 112-132, 138-158, 176-196, and 203-223; these read ILTLALTNYTLYLIIVVSIIF, WGVAIIAIYDTILNLVYSQIG, FFPLIFTIFNLIFAANLISMI, LVAIVSFSLALWIGNVILGLY, FFALFVPSGTPLPLVPILVLI, ANILSGHLLMLILGSLIVNLM, and FIGGIVPIVAVIAITILEVGI.

This sequence belongs to the ATPase A chain family. F-type ATPases have 2 components, CF(1) - the catalytic core - and CF(0) - the membrane proton channel. CF(1) has five subunits: alpha(3), beta(3), gamma(1), delta(1), epsilon(1). CF(0) has three main subunits: a, b and c.

It is found in the mitochondrion inner membrane. Functionally, mitochondrial membrane ATP synthase (F(1)F(0) ATP synthase or Complex V) produces ATP from ADP in the presence of a proton gradient across the membrane which is generated by electron transport complexes of the respiratory chain. F-type ATPases consist of two structural domains, F(1) - containing the extramembraneous catalytic core and F(0) - containing the membrane proton channel, linked together by a central stalk and a peripheral stalk. During catalysis, ATP synthesis in the catalytic domain of F(1) is coupled via a rotary mechanism of the central stalk subunits to proton translocation. Key component of the proton channel; it may play a direct role in the translocation of protons across the membrane. The protein is ATP synthase subunit a (ATP6) of Candida albicans (strain SC5314 / ATCC MYA-2876) (Yeast).